Reading from the N-terminus, the 142-residue chain is Large ribosomal subunit protein uL13 (142 aa).

Belongs to the universal ribosomal protein uL13 family. As to quaternary structure, part of the 50S ribosomal subunit.

This protein is one of the early assembly proteins of the 50S ribosomal subunit, although it is not seen to bind rRNA by itself. It is important during the early stages of 50S assembly. This Proteus mirabilis (strain HI4320) protein is Large ribosomal subunit protein uL13.